Consider the following 559-residue polypeptide: Fanconi-associated nuclease 1 homolog (559 aa).

Positions 386, 507, 522, and 523 each coordinate Mn(2+). The VRR-NUC domain maps to 443-555; the sequence is DGSYRDAIRC…MPVAVCYVRW (113 aa).

It belongs to the FAN1 family. Mn(2+) serves as cofactor. Mg(2+) is required as a cofactor.

It carries out the reaction Hydrolytically removes 5'-nucleotides successively from the 3'-hydroxy termini of 3'-hydroxy-terminated oligonucleotides.. Nuclease required for the repair of DNA interstrand cross-links (ICL). Acts as a 5'-3' exonuclease that anchors at a cut end of DNA and cleaves DNA successively at every third nucleotide, allowing to excise an ICL from one strand through flanking incisions. Also has endonuclease activity toward 5'-flaps. This is Fanconi-associated nuclease 1 homolog from Pseudomonas aeruginosa (strain ATCC 15692 / DSM 22644 / CIP 104116 / JCM 14847 / LMG 12228 / 1C / PRS 101 / PAO1).